A 154-amino-acid polypeptide reads, in one-letter code: MIHFILLFSRQGKLRLQKWYTTLPDKERKKITRDIIQTVLSRGHRTSSFIDWKELKLVYKRYASLYFCCAIENQDNELLTLEIVHRYVELLDKYFGNVCELDIIFNFEKAYFILDEFIIGGEIQETSKKTAVKAIEDSDMLQETMEEYMNKPTF.

It belongs to the adaptor complexes small subunit family. In terms of assembly, adaptor protein complex 1 (AP-1) is a heterotetramer composed of two large adaptins (gamma-type subunit AP1G1 and beta-type subunit AP1B1), a medium adaptin (mu-type subunit AP1M1 or AP1M2) and a small adaptin (sigma-type subunit AP1S1 or AP1S2 or AP1S3).

It localises to the golgi apparatus. The protein resides in the cytoplasmic vesicle membrane. Its subcellular location is the membrane. It is found in the clathrin-coated pit. In terms of biological role, subunit of clathrin-associated adaptor protein complex 1 that plays a role in protein sorting in the late-Golgi/trans-Golgi network (TGN) and/or endosomes. The AP complexes mediate both the recruitment of clathrin to membranes and the recognition of sorting signals within the cytosolic tails of transmembrane cargo molecules. Involved in TLR3 trafficking. This chain is AP-1 complex subunit sigma-3 (Ap1s3), found in Mus musculus (Mouse).